A 3373-amino-acid chain; its full sequence is Intermembrane lipid transfer protein vps13A (3373 aa).

Positions 3–119 constitute a Chorein N-terminal domain; it reads FEGLVSDVLS…QAELKKKKLE (117 aa). 5 disordered regions span residues 818 to 858, 1028 to 1096, 1259 to 1304, 1648 to 1729, and 1872 to 1913; these read PKAT…VNSS, VPIN…KTAS, NNNK…DLEK, DPSI…EEEK, and QKKR…GKKD. The span at 823–839 shows a compositional bias: polar residues; the sequence is TPINDSNSPSSVSPKLI. Low complexity-rich tracts occupy residues 840–858 and 1048–1066; these read STSP…VNSS and SSPN…QSPQ. Basic and acidic residues-rich tracts occupy residues 1263 to 1274 and 1288 to 1304; these read SIEKSKSIDSKL and RSDD…DLEK. Composition is skewed to low complexity over residues 1659–1685, 1695–1716, and 1884–1898; these read QQQQ…RSQS, SSIG…SLSS, and SSST…STNS. Residues 1899-1909 are compositionally biased toward polar residues; sequence FQTSTSGNSNS. In terms of domain architecture, SHR-BD spans 2405 to 2706; the sequence is TLSFYCQYWL…CYGWDEPSAE (302 aa). The interval 2909 to 2933 is disordered; the sequence is RGNNASNNNNNNGMTSSQMRQSGSG. Residues 2911 to 2920 show a composition bias toward low complexity; that stretch reads NNASNNNNNN.

Belongs to the VPS13 family.

The protein resides in the membrane. Mediates the transfer of lipids between membranes at organelle contact sites. The polypeptide is Intermembrane lipid transfer protein vps13A (vps13A) (Dictyostelium discoideum (Social amoeba)).